Consider the following 515-residue polypeptide: 1-pyrroline-5-carboxylate dehydrogenase (515 aa).

Residues glutamate 286 and cysteine 320 contribute to the active site.

This sequence belongs to the aldehyde dehydrogenase family. RocA subfamily.

It catalyses the reaction L-glutamate 5-semialdehyde + NAD(+) + H2O = L-glutamate + NADH + 2 H(+). The protein operates within amino-acid degradation; L-proline degradation into L-glutamate; L-glutamate from L-proline: step 2/2. The protein is 1-pyrroline-5-carboxylate dehydrogenase of Bacillus cytotoxicus (strain DSM 22905 / CIP 110041 / 391-98 / NVH 391-98).